A 360-amino-acid chain; its full sequence is C-C chemokine receptor type 4 (360 aa).

The Extracellular segment spans residues 1-39 (MNATEVTDTTQDETVYNSYYFYESMPKPCTKEGIKAFGE). N2 is a glycosylation site (N-linked (GlcNAc...) asparagine). A helical membrane pass occupies residues 40–67 (VFLPPLYSLVFLLGLFGNSVVVLVLFKY). The Cytoplasmic segment spans residues 68-77 (KRLKSMTDVY). Residues 78-98 (LLNLAISDLLFVLSLPFWGYY) form a helical membrane-spanning segment. The Extracellular segment spans residues 99–111 (AADQWVFGLGLCK). Cysteines 110 and 187 form a disulfide. The chain crosses the membrane as a helical span at residues 112-133 (IVSWMYLVGFYSGIFFIMLMSI). At 134–150 (DRYLAIVHAVFSLKART) the chain is on the cytoplasmic side. Residues 151-175 (LTYGVITSLITWSVAVFASLPGLLF) form a helical membrane-spanning segment. The Extracellular segment spans residues 176 to 206 (STCYTEHNHTYCKTQYSVNSTTWKVLSSLEI). 2 N-linked (GlcNAc...) asparagine glycosylation sites follow: N183 and N194. A helical transmembrane segment spans residues 207 to 226 (NVLGLLIPLGIMLFCYSMII). The Cytoplasmic portion of the chain corresponds to 227–242 (RTLQHCKNEKKNRAVR). Residues 243 to 267 (MIFAVVVLFLGFWTPYNVVLFLETL) form a helical membrane-spanning segment. The Extracellular portion of the chain corresponds to 268-284 (VELEVLQDCTLERYLDY). The chain crosses the membrane as a helical span at residues 285–308 (AIQATETLAFIHCCLNPVIYFFLG). The Cytoplasmic portion of the chain corresponds to 309 to 360 (EKFRKYITQLFRTCRGPLVLCKHCDFLQVYSADMSSSSYTQSTVDHDFRDAL).

The protein belongs to the G-protein coupled receptor 1 family. Post-translationally, in natural killer cells, CCL22 binding induces phosphorylation on yet undefined Ser/Thr residues, most probably by beta-adrenergic receptor kinases 1 and 2. As to expression, expressed in the thymus, macrophages and T- and B-cells.

It is found in the cell membrane. Functionally, high affinity receptor for the C-C type chemokines CCL17/TARC and CCL22/MDC. The activity of this receptor is mediated by G(i) proteins which activate a phosphatidylinositol-calcium second messenger system. Could play a role in lipopolysaccharide (LPS)-induced endotoxic shock. In the CNS, could mediate hippocampal-neuron survival. This chain is C-C chemokine receptor type 4 (Ccr4), found in Mus musculus (Mouse).